A 178-amino-acid polypeptide reads, in one-letter code: Alkyl hydroperoxide reductase AhpD (178 aa).

Catalysis depends on Cys-131, which acts as the Proton donor. Cys-131 and Cys-134 are oxidised to a cystine. Cys-134 acts as the Cysteine sulfenic acid (-SOH) intermediate in catalysis.

The protein belongs to the AhpD family.

The catalysed reaction is N(6)-[(R)-dihydrolipoyl]-L-lysyl-[lipoyl-carrier protein] + a hydroperoxide = N(6)-[(R)-lipoyl]-L-lysyl-[lipoyl-carrier protein] + an alcohol + H2O. Antioxidant protein with alkyl hydroperoxidase activity. Required for the reduction of the AhpC active site cysteine residues and for the regeneration of the AhpC enzyme activity. This is Alkyl hydroperoxide reductase AhpD from Methylocella silvestris (strain DSM 15510 / CIP 108128 / LMG 27833 / NCIMB 13906 / BL2).